A 262-amino-acid chain; its full sequence is Flap endonuclease Xni (262 aa).

Asp-112 lines the Mg(2+) pocket. In terms of domain architecture, 5'-3' exonuclease spans 171-258 (QQLNDYWAIT…GFNLKDLRYT (88 aa)). Positions 179, 190, and 193 each coordinate K(+). An interaction with DNA region spans residues 192-197 (GIGSKG).

Belongs to the Xni family. Requires Mg(2+) as cofactor. The cofactor is K(+).

Functionally, has flap endonuclease activity. During DNA replication, flap endonucleases cleave the 5'-overhanging flap structure that is generated by displacement synthesis when DNA polymerase encounters the 5'-end of a downstream Okazaki fragment. The chain is Flap endonuclease Xni from Psychromonas ingrahamii (strain DSM 17664 / CCUG 51855 / 37).